A 566-amino-acid chain; its full sequence is Protein downstream neighbor of Son (566 aa).

The segment at M1–D110 is disordered. Residues S28 and S34 each carry the phosphoserine modification. Over residues G62–P72 the composition is skewed to gly residues. Positions A73–R82 are enriched in low complexity.

It belongs to the DONSON family. In terms of assembly, component of the replisome complex composed of at least DONSON, MCM2, MCM7, PCNA and TICRR; interaction at least with PCNA occurs during DNA replication. Expressed in the brain, with higher levels in prenatal compared to adult brain.

It localises to the nucleus. Its function is as follows. Replisome component that maintains genome stability by protecting stalled or damaged replication forks. After the induction of replication stress, required for the stabilization of stalled replication forks, the efficient activation of the intra-S-phase and G/2M cell-cycle checkpoints and the maintenance of genome stability. The protein is Protein downstream neighbor of Son (DONSON) of Homo sapiens (Human).